The following is a 186-amino-acid chain: Large ribosomal subunit protein bL9 (186 aa).

Basic and acidic residues predominate over residues 151–167 (PEEAEKQARGEAIMREE). Residues 151–186 (PEEAEKQARGEAIMREESEYELETGEEVAEGPEQTA) are disordered. Acidic residues predominate over residues 168–180 (SEYELETGEEVAE).

It belongs to the bacterial ribosomal protein bL9 family.

Binds to the 23S rRNA. The polypeptide is Large ribosomal subunit protein bL9 (Acidiphilium cryptum (strain JF-5)).